The chain runs to 340 residues: Beta-1,3-N-acetylglucosaminyltransferase radical fringe (340 aa).

At 1–4 (MKIT) the chain is on the cytoplasmic side. Residues 5–25 (YVGLIKVCFLVFLLLCATVLL) traverse the membrane as a helical; Signal-anchor for type II membrane protein segment. Over 26-340 (NISWRQRDSS…AFSLAEDPTR (315 aa)) the chain is Lumenal. N-linked (GlcNAc...) asparagine glycosylation occurs at asparagine 42. Arginine 110 serves as a coordination point for substrate. Asparagine 149 is a glycosylation site (N-linked (GlcNAc...) asparagine). Cystine bridges form between cysteine 150-cysteine 161 and cysteine 179-cysteine 242. Residue aspartate 183 participates in substrate binding. Residue aspartate 184 participates in Mn(2+) binding. Aspartate 272 is a catalytic residue. Histidine 296 provides a ligand contact to Mn(2+).

It belongs to the glycosyltransferase 31 family. Requires Mn(2+) as cofactor.

Its subcellular location is the golgi apparatus membrane. The enzyme catalyses 3-O-(alpha-L-fucosyl)-L-threonyl-[EGF-like domain protein] + UDP-N-acetyl-alpha-D-glucosamine = 3-O-(N-acetyl-beta-D-glucosaminyl-(1-&gt;3)-alpha-L-fucosyl)-L-threonyl-[EGF-like domain protein] + UDP + H(+). The catalysed reaction is 3-O-(alpha-L-fucosyl)-L-seryl-[EGF-like domain protein] + UDP-N-acetyl-alpha-D-glucosamine = 3-O-(N-acetyl-beta-D-glucosaminyl-(1-&gt;3)-alpha-L-fucosyl)-L-seryl-[EGF-like domain protein] + UDP + H(+). Its function is as follows. Glycosyltransferase that initiates the elongation of O-linked fucose residues attached to EGF-like repeats in the extracellular domain of Notch molecules. In Xenopus laevis (African clawed frog), this protein is Beta-1,3-N-acetylglucosaminyltransferase radical fringe (rfng).